The following is a 494-amino-acid chain: Tripartite motif-containing protein 5 (494 aa).

Residue A2 is modified to N-acetylalanine. An RING-type zinc finger spans residues 15–59 (CPICLELLTQPLSLDCGHSFCQACLTANHKTSMPDEGERSCPVCR). S86 carries the post-translational modification Phosphoserine. The B box-type zinc-finger motif lies at 91 to 133 (QKVDHCARHGEKLLLFCQEDRKVICWLCERSQEHRGHHTFLTE). 4 residues coordinate Zn(2+): C96, H99, C118, and H124. The stretch at 132-241 (TEEVAQEYQV…LISDLEHRLQ (110 aa)) forms a coiled coil. A required for interaction with GABARAP and for autophagy region spans residues 186 to 199 (FEQLRHILDWVESN). The region spanning 282–494 (LKVMLEVLRE…VPMTLCSPSS (213 aa)) is the B30.2/SPRY domain.

Belongs to the TRIM/RBCC family. Can form homodimers and homotrimers. In addition to lower-order dimerization, also exhibits a higher-order multimerization and both low- and high-order multimerizations are essential for its restriction activity. Interacts with BTBD1 and BTBD2. Interacts with PSMC4, PSMC5, PSMD7 and HSPA8/HSC70. Interacts (via B30.2/SPRY domain) with HSPA1A/B. Interacts with PSMC2, MAP3K7/TAK1, TAB2 and TAB3. Interacts with SQSTM1. Interacts with TRIM6 and TRIM34. Interacts with ULK1 (phosphorylated form), GABARAP, GABARAPL1, GABARAPL2, MAP1LC3A, MAP1LC3C and BECN1. Post-translationally, degraded in a proteasome-independent fashion in the absence of viral infection but in a proteasome-dependent fashion following exposure to restriction sensitive virus. Autoubiquitinated in a RING finger- and UBE2D2-dependent manner. Monoubiquitinated by TRIM21. Deubiquitinated by Yersinia YopJ. Ubiquitination may not lead to proteasomal degradation.

Its subcellular location is the cytoplasm. The protein localises to the nucleus. It carries out the reaction S-ubiquitinyl-[E2 ubiquitin-conjugating enzyme]-L-cysteine + [acceptor protein]-L-lysine = [E2 ubiquitin-conjugating enzyme]-L-cysteine + N(6)-ubiquitinyl-[acceptor protein]-L-lysine.. Its pathway is protein modification; protein ubiquitination. Functionally, capsid-specific restriction factor that prevents infection from non-host-adapted retroviruses. Blocks viral replication early in the life cycle, after viral entry but before reverse transcription. In addition to acting as a capsid-specific restriction factor, also acts as a pattern recognition receptor that activates innate immune signaling in response to the retroviral capsid lattice. Binding to the viral capsid triggers its E3 ubiquitin ligase activity, and in concert with the heterodimeric ubiquitin conjugating enzyme complex UBE2V1-UBE2N (also known as UBC13-UEV1A complex) generates 'Lys-63'-linked polyubiquitin chains, which in turn are catalysts in the autophosphorylation of the MAP3K7/TAK1 complex (includes TAK1, TAB2, and TAB3). Activation of the MAP3K7/TAK1 complex by autophosphorylation results in the induction and expression of NF-kappa-B and MAPK-responsive inflammatory genes, thereby leading to an innate immune response in the infected cell. Plays a role in regulating autophagy through activation of autophagy regulator BECN1 by causing its dissociation from its inhibitors BCL2 and TAB2. This Symphalangus syndactylus (Siamang) protein is Tripartite motif-containing protein 5 (TRIM5).